The following is a 56-amino-acid chain: Large ribosomal subunit protein bL33 (56 aa).

This sequence belongs to the bacterial ribosomal protein bL33 family.

The polypeptide is Large ribosomal subunit protein bL33 (Actinobacillus pleuropneumoniae serotype 5b (strain L20)).